A 431-amino-acid chain; its full sequence is UDP-N-acetylmuramate--L-alanine ligase (431 aa).

Residue Gly108–Thr114 participates in ATP binding.

Belongs to the MurCDEF family.

The protein localises to the cytoplasm. The catalysed reaction is UDP-N-acetyl-alpha-D-muramate + L-alanine + ATP = UDP-N-acetyl-alpha-D-muramoyl-L-alanine + ADP + phosphate + H(+). The protein operates within cell wall biogenesis; peptidoglycan biosynthesis. Its function is as follows. Cell wall formation. The protein is UDP-N-acetylmuramate--L-alanine ligase of Campylobacter jejuni (strain RM1221).